Consider the following 432-residue polypeptide: Glutamyl-tRNA reductase (432 aa).

Residues Thr-49–Arg-52, Ser-109, Glu-114–Gln-116, and Gln-120 each bind substrate. Cys-50 serves as the catalytic Nucleophile. Residue Gly-198–Ser-203 coordinates NADP(+).

This sequence belongs to the glutamyl-tRNA reductase family. As to quaternary structure, homodimer.

It carries out the reaction (S)-4-amino-5-oxopentanoate + tRNA(Glu) + NADP(+) = L-glutamyl-tRNA(Glu) + NADPH + H(+). It functions in the pathway porphyrin-containing compound metabolism; protoporphyrin-IX biosynthesis; 5-aminolevulinate from L-glutamyl-tRNA(Glu): step 1/2. It participates in porphyrin-containing compound metabolism; chlorophyll biosynthesis. Its function is as follows. Catalyzes the NADPH-dependent reduction of glutamyl-tRNA(Glu) to glutamate 1-semialdehyde (GSA). In Synechococcus sp. (strain CC9605), this protein is Glutamyl-tRNA reductase.